We begin with the raw amino-acid sequence, 214 residues long: MDFNQVKVINHPLIQHKLTIMRKKETSTVKFRTLMHEVSMLLAYEVTRDLEIEYEEIETPLATMQSPVLKGKKLVFVSILRAGNGLLDGMLQLVPTARIGHIGLYRDPKTLEAVEYYFKLPEHTQDRDVIVVDPMLATGNSAIAAVKEVKALHPKSIKFLCLLAAPEGISNFHGEHPDVPIFTAAIDEQLNDHGYIVPGLGDAGDRLYGTKLAH.

5-phospho-alpha-D-ribose 1-diphosphate is bound by residues Arg81, Arg106, and 133 to 141 (DPMLATGNS). Uracil contacts are provided by residues Ile196 and 201–203 (GDA). Position 202 (Asp202) interacts with 5-phospho-alpha-D-ribose 1-diphosphate.

It belongs to the UPRTase family. Requires Mg(2+) as cofactor.

The catalysed reaction is UMP + diphosphate = 5-phospho-alpha-D-ribose 1-diphosphate + uracil. The protein operates within pyrimidine metabolism; UMP biosynthesis via salvage pathway; UMP from uracil: step 1/1. With respect to regulation, allosterically activated by GTP. Its function is as follows. Catalyzes the conversion of uracil and 5-phospho-alpha-D-ribose 1-diphosphate (PRPP) to UMP and diphosphate. This chain is Uracil phosphoribosyltransferase, found in Legionella pneumophila (strain Paris).